We begin with the raw amino-acid sequence, 131 residues long: Small ribosomal subunit protein bS6 (131 aa).

The tract at residues 96 to 131 (VTEASPMAKAKDERDSRRGPAGDRSYDEANAEEIAE) is disordered. Basic and acidic residues predominate over residues 104 to 122 (KAKDERDSRRGPAGDRSYD).

The protein belongs to the bacterial ribosomal protein bS6 family.

In terms of biological role, binds together with bS18 to 16S ribosomal RNA. In Shewanella sp. (strain ANA-3), this protein is Small ribosomal subunit protein bS6.